Here is a 401-residue protein sequence, read N- to C-terminus: Canavanine gamma-lyase (401 aa).

Lysine 214 carries the post-translational modification N6-(pyridoxal phosphate)lysine.

Belongs to the trans-sulfuration enzymes family. Requires pyridoxal 5'-phosphate as cofactor.

The catalysed reaction is L-canavanine + H2O = N-hydroxyguanidine + L-homoserine. Its function is as follows. Lyase involved in the degradation of canavanine, the delta-oxa-analog of arginine, allowing growth on canavanine as sole nitrogen and carbon source. Catalyzes the elimination of hydroxyguanidine from canavanine with a subsequent water addition to yield homoserine. This Rhizobium leguminosarum bv. trifolii (strain WSM2304) protein is Canavanine gamma-lyase.